We begin with the raw amino-acid sequence, 455 residues long: ATP-dependent protease ATPase subunit HslU (455 aa).

Residues Val-23, 65 to 70 (GVGKTE), Asp-266, Glu-333, and Arg-405 contribute to the ATP site.

Belongs to the ClpX chaperone family. HslU subfamily. As to quaternary structure, a double ring-shaped homohexamer of HslV is capped on each side by a ring-shaped HslU homohexamer. The assembly of the HslU/HslV complex is dependent on binding of ATP.

Its subcellular location is the cytoplasm. ATPase subunit of a proteasome-like degradation complex; this subunit has chaperone activity. The binding of ATP and its subsequent hydrolysis by HslU are essential for unfolding of protein substrates subsequently hydrolyzed by HslV. HslU recognizes the N-terminal part of its protein substrates and unfolds these before they are guided to HslV for hydrolysis. This chain is ATP-dependent protease ATPase subunit HslU, found in Xanthomonas oryzae pv. oryzae (strain MAFF 311018).